Reading from the N-terminus, the 492-residue chain is 2-succinylbenzoate--CoA ligase (492 aa).

The protein belongs to the ATP-dependent AMP-binding enzyme family. MenE subfamily.

The enzyme catalyses 2-succinylbenzoate + ATP + CoA = 2-succinylbenzoyl-CoA + AMP + diphosphate. It functions in the pathway quinol/quinone metabolism; 1,4-dihydroxy-2-naphthoate biosynthesis; 1,4-dihydroxy-2-naphthoate from chorismate: step 5/7. The protein operates within quinol/quinone metabolism; menaquinone biosynthesis. In terms of biological role, converts 2-succinylbenzoate (OSB) to 2-succinylbenzoyl-CoA (OSB-CoA). This Staphylococcus aureus (strain MRSA252) protein is 2-succinylbenzoate--CoA ligase.